A 331-amino-acid chain; its full sequence is Olfactory receptor 6B3 (331 aa).

Residues 1 to 25 (MSGENVTRVGTFILVGFPTAPGLQY) are Extracellular-facing. N5 carries an N-linked (GlcNAc...) asparagine glycan. The helical transmembrane segment at 26–46 (LLFLLFLLTYLFVLVENLAII) threads the bilayer. The Cytoplasmic segment spans residues 47–54 (LTVWSSTS). The helical transmembrane segment at 55 to 75 (LHRPMYYFLSSMSFLEIWYVS) threads the bilayer. At 76-99 (DITPKMLEGFLLQQKRISFVGCMT) the chain is on the extracellular side. A disulfide bond links C97 and C189. A helical transmembrane segment spans residues 100-120 (QLYFFSSLVCTECVLLASMAY). The Cytoplasmic portion of the chain corresponds to 121-139 (DRYVAICHPLRYHVLVTPG). Residues 140–160 (LCLQLVGFSFVSGFTISMIKV) traverse the membrane as a helical segment. Residues 161–196 (CFISSVTFCGSNVLNHFFCDISPILKLACTDFSTAE) lie on the Extracellular side of the membrane. Residues 197 to 217 (LVDFILAFIILVFPLLATMLS) traverse the membrane as a helical segment. Residues 218 to 237 (YAHITLAVLRIPSATGCWRA) lie on the Cytoplasmic side of the membrane. Residues 238–258 (FFTCASHLTVVTVFYTALLFM) form a helical membrane-spanning segment. The Extracellular portion of the chain corresponds to 259–271 (YVRPQAIDSRSSN). Residues 272–292 (KLISVLYTVITPILNPLIYCL) form a helical membrane-spanning segment. Residues 293–331 (RNKEFKNALKKAFGLTSCAVEGRLSSLLELHLQIHSQPL) lie on the Cytoplasmic side of the membrane.

It belongs to the G-protein coupled receptor 1 family.

The protein localises to the cell membrane. Its function is as follows. Odorant receptor. The sequence is that of Olfactory receptor 6B3 (OR6B3) from Homo sapiens (Human).